We begin with the raw amino-acid sequence, 210 residues long: Ribonuclease HII (210 aa).

The RNase H type-2 domain occupies Y18 to L208. A divalent metal cation is bound by residues D24, E25, and D116.

Belongs to the RNase HII family. It depends on Mn(2+) as a cofactor. Mg(2+) is required as a cofactor.

It localises to the cytoplasm. It carries out the reaction Endonucleolytic cleavage to 5'-phosphomonoester.. Functionally, endonuclease that specifically degrades the RNA of RNA-DNA hybrids. The chain is Ribonuclease HII from Endomicrobium trichonymphae.